Reading from the N-terminus, the 321-residue chain is tRNA-dihydrouridine synthase B (321 aa).

Residues 16 to 18 (PMA) and Q70 contribute to the FMN site. C100 functions as the Proton donor in the catalytic mechanism. FMN-binding positions include K139, 200–202 (NGD), and 224–225 (GR).

This sequence belongs to the Dus family. DusB subfamily. FMN is required as a cofactor.

It carries out the reaction a 5,6-dihydrouridine in tRNA + NAD(+) = a uridine in tRNA + NADH + H(+). The enzyme catalyses a 5,6-dihydrouridine in tRNA + NADP(+) = a uridine in tRNA + NADPH + H(+). Functionally, catalyzes the synthesis of 5,6-dihydrouridine (D), a modified base found in the D-loop of most tRNAs, via the reduction of the C5-C6 double bond in target uridines. The sequence is that of tRNA-dihydrouridine synthase B from Pectobacterium carotovorum (Erwinia carotovora).